A 231-amino-acid chain; its full sequence is MQDEERYMTLNVQSKKRTSTQTTQLTFKDYSVVLHWYKILLGISGTLNGILALALISLILLVSQGVLLKCQKGSHSNTTEHEDIGDLKMNNGTRRNTSNKDLCVSRSADQTVLCQSEWLKYRGKCYWFSNEMKSWSDSYVYCLERKSHLLIIQDELEMAFIQKNLRQSNYVWMGLNFTSLKMTWTWVDGSPLDPKIFFIKGPAKENSCAAIKESKIYSETCSSVFKWICQY.

The Cytoplasmic portion of the chain corresponds to 1–38 (MQDEERYMTLNVQSKKRTSTQTTQLTFKDYSVVLHWYK). Phosphotyrosine is present on tyrosine 7. Residues 39 to 59 (ILLGISGTLNGILALALISLI) form a helical; Signal-anchor for type II membrane protein membrane-spanning segment. Residues 60–231 (LLVSQGVLLK…SSVFKWICQY (172 aa)) are Extracellular-facing. Residues asparagine 77, asparagine 91, asparagine 96, and asparagine 176 are each glycosylated (N-linked (GlcNAc...) asparagine). Residues 121–230 (YRGKCYWFSN…CSSVFKWICQ (110 aa)) enclose the C-type lectin domain. Disulfide bonds link cysteine 142–cysteine 229 and cysteine 208–cysteine 221.

As to quaternary structure, homodimer. Interacts with CLEC2B. Post-translationally, phosphorylated on Tyr-7; this phosphorylation is required for NKp80/KLRF1-mediated cytotoxicity.

It localises to the membrane. Its function is as follows. Functions as an activating receptor involved in immunosurveillance upon binding to various ligands displayed at the surface of myeloid cells. Upon interaction with CLEC2B ligand, stimulates NK-cell cytotoxicity and cytokine production leading to the cytolysis of malignant CLEC2B-expressing myeloid cells. Actviation of the common cytotoxicity pathway involves SRC and SYK kinases. This Macaca fascicularis (Crab-eating macaque) protein is Killer cell lectin-like receptor subfamily F member 1 (KLRF1).